Consider the following 475-residue polypeptide: Ribonuclease Y (475 aa).

The disordered stretch occupies residues 34–73 (EFERESRERRNELQRVERRLMQKEESLDKKSETLEQKDDR). Residues 165–228 (TVTVVQLPND…EVARIALEKL (64 aa)) form the KH domain. One can recognise an HD domain in the interval 291 to 384 (VLKHAIEVSH…VTAADAISAA (94 aa)).

Belongs to the RNase Y family.

Endoribonuclease that initiates mRNA decay. The protein is Ribonuclease Y of Alkaliphilus metalliredigens (strain QYMF).